A 365-amino-acid polypeptide reads, in one-letter code: DNA polymerase IV 1 (365 aa).

One can recognise a UmuC domain in the interval 6–196 (VLHIDMDYFF…LNVSKLWGIG (191 aa)). Mg(2+) is bound by residues Asp-10 and Asp-113. Glu-114 is an active-site residue.

This sequence belongs to the DNA polymerase type-Y family. As to quaternary structure, monomer. It depends on Mg(2+) as a cofactor.

The protein localises to the cytoplasm. It catalyses the reaction DNA(n) + a 2'-deoxyribonucleoside 5'-triphosphate = DNA(n+1) + diphosphate. Poorly processive, error-prone DNA polymerase involved in untargeted mutagenesis. Copies undamaged DNA at stalled replication forks, which arise in vivo from mismatched or misaligned primer ends. These misaligned primers can be extended by PolIV. Exhibits no 3'-5' exonuclease (proofreading) activity. May be involved in translesional synthesis. This Methanosarcina mazei (strain ATCC BAA-159 / DSM 3647 / Goe1 / Go1 / JCM 11833 / OCM 88) (Methanosarcina frisia) protein is DNA polymerase IV 1 (dbh1).